Consider the following 435-residue polypeptide: tRNA(Ile)-lysidine synthase (435 aa).

Residue 23–28 coordinates ATP; it reads SGGMDS.

The protein belongs to the tRNA(Ile)-lysidine synthase family.

It is found in the cytoplasm. It carries out the reaction cytidine(34) in tRNA(Ile2) + L-lysine + ATP = lysidine(34) in tRNA(Ile2) + AMP + diphosphate + H(+). Its function is as follows. Ligates lysine onto the cytidine present at position 34 of the AUA codon-specific tRNA(Ile) that contains the anticodon CAU, in an ATP-dependent manner. Cytidine is converted to lysidine, thus changing the amino acid specificity of the tRNA from methionine to isoleucine. The sequence is that of tRNA(Ile)-lysidine synthase from Xanthomonas campestris pv. campestris (strain 8004).